Reading from the N-terminus, the 380-residue chain is Succinyl-diaminopimelate desuccinylase (380 aa).

His70 serves as a coordination point for Zn(2+). Asp72 is an active-site residue. Asp104 contacts Zn(2+). The active-site Proton acceptor is Glu138. Positions 139, 167, and 353 each coordinate Zn(2+).

Belongs to the peptidase M20A family. DapE subfamily. As to quaternary structure, homodimer. Zn(2+) is required as a cofactor. It depends on Co(2+) as a cofactor.

It carries out the reaction N-succinyl-(2S,6S)-2,6-diaminopimelate + H2O = (2S,6S)-2,6-diaminopimelate + succinate. It functions in the pathway amino-acid biosynthesis; L-lysine biosynthesis via DAP pathway; LL-2,6-diaminopimelate from (S)-tetrahydrodipicolinate (succinylase route): step 3/3. In terms of biological role, catalyzes the hydrolysis of N-succinyl-L,L-diaminopimelic acid (SDAP), forming succinate and LL-2,6-diaminopimelate (DAP), an intermediate involved in the bacterial biosynthesis of lysine and meso-diaminopimelic acid, an essential component of bacterial cell walls. The polypeptide is Succinyl-diaminopimelate desuccinylase (Ectopseudomonas mendocina (strain ymp) (Pseudomonas mendocina)).